We begin with the raw amino-acid sequence, 515 residues long: Histidine ammonia-lyase (515 aa).

Positions 142-144 (ASG) form a cross-link, 5-imidazolinone (Ala-Gly). The residue at position 143 (Ser-143) is a 2,3-didehydroalanine (Ser).

The protein belongs to the PAL/histidase family. Contains an active site 4-methylidene-imidazol-5-one (MIO), which is formed autocatalytically by cyclization and dehydration of residues Ala-Ser-Gly.

Its subcellular location is the cytoplasm. It carries out the reaction L-histidine = trans-urocanate + NH4(+). It functions in the pathway amino-acid degradation; L-histidine degradation into L-glutamate; N-formimidoyl-L-glutamate from L-histidine: step 1/3. The sequence is that of Histidine ammonia-lyase from Methylobacterium nodulans (strain LMG 21967 / CNCM I-2342 / ORS 2060).